Here is a 300-residue protein sequence, read N- to C-terminus: Nucleotide-binding protein Daci_5422 (300 aa).

10–17 serves as a coordination point for ATP; it reads GMSGSGKS. Position 59–62 (59–62) interacts with GTP; that stretch reads DARS.

Belongs to the RapZ-like family.

Its function is as follows. Displays ATPase and GTPase activities. This chain is Nucleotide-binding protein Daci_5422, found in Delftia acidovorans (strain DSM 14801 / SPH-1).